A 193-amino-acid polypeptide reads, in one-letter code: Xanthine phosphoribosyltransferase (193 aa).

Xanthine is bound by residues L20 and N27. Residue 129 to 133 (ANGKA) coordinates 5-phospho-alpha-D-ribose 1-diphosphate. Position 157 (K157) interacts with xanthine.

It belongs to the purine/pyrimidine phosphoribosyltransferase family. Xpt subfamily. As to quaternary structure, homodimer.

The protein localises to the cytoplasm. The catalysed reaction is XMP + diphosphate = xanthine + 5-phospho-alpha-D-ribose 1-diphosphate. The protein operates within purine metabolism; XMP biosynthesis via salvage pathway; XMP from xanthine: step 1/1. Functionally, converts the preformed base xanthine, a product of nucleic acid breakdown, to xanthosine 5'-monophosphate (XMP), so it can be reused for RNA or DNA synthesis. The chain is Xanthine phosphoribosyltransferase from Bifidobacterium longum subsp. infantis (strain ATCC 15697 / DSM 20088 / JCM 1222 / NCTC 11817 / S12).